A 400-amino-acid chain; its full sequence is Glycerol-3-phosphate dehydrogenase [NAD(+)] 1 (400 aa).

Residues 50-55, F138, K161, and A194 contribute to the NAD(+) site; that span reads GSGNWG. Position 161 (K161) interacts with substrate. K254 (proton acceptor) is an active-site residue. NAD(+) is bound by residues R319 and Q348. 319–320 serves as a coordination point for substrate; it reads RN.

It belongs to the NAD-dependent glycerol-3-phosphate dehydrogenase family.

The enzyme catalyses sn-glycerol 3-phosphate + NAD(+) = dihydroxyacetone phosphate + NADH + H(+). This Candida glabrata (strain ATCC 2001 / BCRC 20586 / JCM 3761 / NBRC 0622 / NRRL Y-65 / CBS 138) (Yeast) protein is Glycerol-3-phosphate dehydrogenase [NAD(+)] 1 (GPD1).